The primary structure comprises 211 residues: MQNGTEDKSNIPARSNDDVLPPLAVRLTMKVMRLIFIGKMFAYSFVPFPPFKLLTFDNTVGWFVAYSAIVSIWGFAVWMERGYRHKINLLPPRCTKIRCSRCNTRIRSPNWFKYKNWLYFFLLYVSLTTSNLIIQLASFMTEMSRRGISVPGTKDPGKRDYLGLIIPMRFIGAFIHYMTANLFKEYYLHNGPLEKNDRPSTDEKTSENETL.

Over 1-33 (MQNGTEDKSNIPARSNDDVLPPLAVRLTMKVMR) the chain is Cytoplasmic. The helical transmembrane segment at 34 to 54 (LIFIGKMFAYSFVPFPPFKLL) threads the bilayer. Residues 55–58 (TFDN) are Lumenal-facing. The chain crosses the membrane as a helical span at residues 59 to 79 (TVGWFVAYSAIVSIWGFAVWM). At 80 to 116 (ERGYRHKINLLPPRCTKIRCSRCNTRIRSPNWFKYKN) the chain is on the cytoplasmic side. The helical transmembrane segment at 117–137 (WLYFFLLYVSLTTSNLIIQLA) threads the bilayer. The Lumenal portion of the chain corresponds to 138–162 (SFMTEMSRRGISVPGTKDPGKRDYL). A helical membrane pass occupies residues 163–183 (GLIIPMRFIGAFIHYMTANLF). Residues 184 to 211 (KEYYLHNGPLEKNDRPSTDEKTSENETL) are Cytoplasmic-facing.

It is found in the endoplasmic reticulum membrane. This is an uncharacterized protein from Saccharomyces cerevisiae (strain ATCC 204508 / S288c) (Baker's yeast).